A 310-amino-acid polypeptide reads, in one-letter code: Choline trimethylamine-lyase activating enzyme (310 aa).

Residues 17-304 (YDGPGVRTLV…EACIRKYDFP (288 aa)) form the Radical SAM core domain. Cys-31, Cys-35, Cys-38, Cys-57, Cys-60, Cys-63, and Cys-99 together coordinate [4Fe-4S] cluster. 37–39 (WCS) provides a ligand contact to S-adenosyl-L-methionine. 4Fe-4S ferredoxin-type domains lie at 48–77 (YQVL…ISAS) and 79–109 (LRHG…VVGE). S-adenosyl-L-methionine is bound by residues Gly-139, 188 to 190 (DVK), and His-264.

It belongs to the organic radical-activating enzymes family. As to quaternary structure, monomer. [4Fe-4S] cluster is required as a cofactor.

The enzyme catalyses glycyl-[protein] + reduced [flavodoxin] + S-adenosyl-L-methionine = glycin-2-yl radical-[protein] + semiquinone [flavodoxin] + 5'-deoxyadenosine + L-methionine + H(+). It participates in amine and polyamine metabolism; choline degradation. Its function is as follows. Catalyzes activation of the choline trimethylamine-lyase CutC under anaerobic conditions by generation of an organic free radical on a glycine residue, via a homolytic cleavage of S-adenosyl-L-methionine (SAM). Is involved in the anaerobic choline utilization pathway that allows D.alaskensis to grow on choline as a source of carbon and energy. This is Choline trimethylamine-lyase activating enzyme from Oleidesulfovibrio alaskensis (strain ATCC BAA-1058 / DSM 17464 / G20) (Desulfovibrio alaskensis).